The sequence spans 393 residues: Formate-dependent phosphoribosylglycinamide formyltransferase (393 aa).

N(1)-(5-phospho-beta-D-ribosyl)glycinamide contacts are provided by residues 22 to 23 (EL) and E82. Residues R114, K155, 160–165 (SSGKGQ), 195–198 (EGFI), and E203 each bind ATP. The region spanning 119-308 (RLAAEELGLP…EFALHARAIL (190 aa)) is the ATP-grasp domain. Residues E267 and E279 each contribute to the Mg(2+) site. Residues D286, K356, and 363–364 (RR) each bind N(1)-(5-phospho-beta-D-ribosyl)glycinamide.

This sequence belongs to the PurK/PurT family. In terms of assembly, homodimer.

The catalysed reaction is N(1)-(5-phospho-beta-D-ribosyl)glycinamide + formate + ATP = N(2)-formyl-N(1)-(5-phospho-beta-D-ribosyl)glycinamide + ADP + phosphate + H(+). It participates in purine metabolism; IMP biosynthesis via de novo pathway; N(2)-formyl-N(1)-(5-phospho-D-ribosyl)glycinamide from N(1)-(5-phospho-D-ribosyl)glycinamide (formate route): step 1/1. Involved in the de novo purine biosynthesis. Catalyzes the transfer of formate to 5-phospho-ribosyl-glycinamide (GAR), producing 5-phospho-ribosyl-N-formylglycinamide (FGAR). Formate is provided by PurU via hydrolysis of 10-formyl-tetrahydrofolate. This chain is Formate-dependent phosphoribosylglycinamide formyltransferase, found in Stutzerimonas stutzeri (strain A1501) (Pseudomonas stutzeri).